The following is a 377-amino-acid chain: Carboxynorspermidine/carboxyspermidine decarboxylase (377 aa).

K41 bears the N6-(pyridoxal phosphate)lysine mark. Positions 238 and 274 each coordinate substrate.

This sequence belongs to the Orn/Lys/Arg decarboxylase class-II family. NspC subfamily. In terms of assembly, homodimer. Pyridoxal 5'-phosphate serves as cofactor.

The protein resides in the cytoplasm. The enzyme catalyses carboxynorspermidine + H(+) = norspermidine + CO2. It carries out the reaction carboxyspermidine + H(+) = spermidine + CO2. Dithiothreitol greatly stimulates activity, maximum stimulation being at 5-20 mM dithiothreitol concentration. Fe(3+), Fe(2+) and Mn(2+) severely inhibit activity (88%, 82% and 50%, respectively), whereas Zn(2+) has a slightly inhibitory effect (23%) and Mg(2+), Ca(2+), Cu(2+) and Cu(+) have no effect. Its function is as follows. Catalyzes the decarboxylation of carboxynorspermidine and carboxyspermidine. 2,3-diaminopropionic acid, 2,4-diaminobutyric acid, L-ornithine or L-lysine cannot serve as substrates. This chain is Carboxynorspermidine/carboxyspermidine decarboxylase, found in Vibrio alginolyticus.